An 863-amino-acid chain; its full sequence is Alanine--tRNA ligase (863 aa).

Positions 552, 556, 654, and 658 each coordinate Zn(2+).

It belongs to the class-II aminoacyl-tRNA synthetase family. Zn(2+) is required as a cofactor.

The protein resides in the cytoplasm. The catalysed reaction is tRNA(Ala) + L-alanine + ATP = L-alanyl-tRNA(Ala) + AMP + diphosphate. Catalyzes the attachment of alanine to tRNA(Ala) in a two-step reaction: alanine is first activated by ATP to form Ala-AMP and then transferred to the acceptor end of tRNA(Ala). Also edits incorrectly charged Ser-tRNA(Ala) and Gly-tRNA(Ala) via its editing domain. In Nitrosomonas eutropha (strain DSM 101675 / C91 / Nm57), this protein is Alanine--tRNA ligase.